We begin with the raw amino-acid sequence, 514 residues long: 2,3-bisphosphoglycerate-independent phosphoglycerate mutase (514 aa).

Residues D14 and S64 each contribute to the Mn(2+) site. S64 acts as the Phosphoserine intermediate in catalysis. Substrate contacts are provided by residues H125, R155 to D156, R187, R193, R263 to R266, and K336. Positions 403, 407, 444, 445, and 463 each coordinate Mn(2+).

This sequence belongs to the BPG-independent phosphoglycerate mutase family. In terms of assembly, monomer. Mn(2+) is required as a cofactor.

It catalyses the reaction (2R)-2-phosphoglycerate = (2R)-3-phosphoglycerate. The protein operates within carbohydrate degradation; glycolysis; pyruvate from D-glyceraldehyde 3-phosphate: step 3/5. Its function is as follows. Catalyzes the interconversion of 2-phosphoglycerate and 3-phosphoglycerate. This Shewanella baltica (strain OS195) protein is 2,3-bisphosphoglycerate-independent phosphoglycerate mutase.